We begin with the raw amino-acid sequence, 351 residues long: Phosphate acyltransferase (351 aa).

The protein belongs to the PlsX family. Homodimer. Probably interacts with PlsY.

Its subcellular location is the cytoplasm. It carries out the reaction a fatty acyl-[ACP] + phosphate = an acyl phosphate + holo-[ACP]. It participates in lipid metabolism; phospholipid metabolism. In terms of biological role, catalyzes the reversible formation of acyl-phosphate (acyl-PO(4)) from acyl-[acyl-carrier-protein] (acyl-ACP). This enzyme utilizes acyl-ACP as fatty acyl donor, but not acyl-CoA. The polypeptide is Phosphate acyltransferase (Neisseria meningitidis serogroup B (strain ATCC BAA-335 / MC58)).